The following is a 146-amino-acid chain: Acidic phospholipase A2 C (146 aa).

The first 21 residues, 1-21, serve as a signal peptide directing secretion; it reads MNPAHLLILAAVCVSPLGASS. The propeptide occupies 22–27; the sequence is NRPMPL. 7 disulfide bridges follow: cysteine 38/cysteine 98, cysteine 53/cysteine 145, cysteine 55/cysteine 71, cysteine 70/cysteine 126, cysteine 77/cysteine 119, cysteine 87/cysteine 112, and cysteine 105/cysteine 117. Positions 54, 56, and 58 each coordinate Ca(2+). Histidine 74 is an active-site residue. Aspartate 75 is a binding site for Ca(2+). Aspartate 120 is an active-site residue.

This sequence belongs to the phospholipase A2 family. Group I subfamily. D49 sub-subfamily. Ca(2+) is required as a cofactor. In terms of tissue distribution, expressed by the venom gland.

The protein resides in the secreted. The enzyme catalyses a 1,2-diacyl-sn-glycero-3-phosphocholine + H2O = a 1-acyl-sn-glycero-3-phosphocholine + a fatty acid + H(+). Functionally, PLA2 catalyzes the calcium-dependent hydrolysis of the 2-acyl groups in 3-sn-phosphoglycerides. The chain is Acidic phospholipase A2 C from Naja sputatrix (Malayan spitting cobra).